The following is a 190-amino-acid chain: Threonylcarbamoyl-AMP synthase (190 aa).

Residues 7–190 (LSSLIKCIRK…IVNGKLIRYV (184 aa)) enclose the YrdC-like domain.

The protein belongs to the SUA5 family. TsaC subfamily.

It localises to the cytoplasm. The catalysed reaction is L-threonine + hydrogencarbonate + ATP = L-threonylcarbamoyladenylate + diphosphate + H2O. In terms of biological role, required for the formation of a threonylcarbamoyl group on adenosine at position 37 (t(6)A37) in tRNAs that read codons beginning with adenine. Catalyzes the conversion of L-threonine, HCO(3)(-)/CO(2) and ATP to give threonylcarbamoyl-AMP (TC-AMP) as the acyladenylate intermediate, with the release of diphosphate. The protein is Threonylcarbamoyl-AMP synthase of Buchnera aphidicola subsp. Schizaphis graminum (strain Sg).